Consider the following 261-residue polypeptide: 1,6-dihydroxycyclohexa-2,4-diene-1-carboxylate dehydrogenase (261 aa).

An NAD(+)-binding site is contributed by 13–37; sequence IVTGAAQGIGRGVALRIAQEGGCLI. Serine 145 serves as a coordination point for substrate. The Proton acceptor role is filled by tyrosine 156.

It belongs to the short-chain dehydrogenases/reductases (SDR) family. Homodimer.

It carries out the reaction (1R,6S)-1,6-dihydroxycyclohexa-2,4-diene-1-carboxylate + NAD(+) = catechol + CO2 + NADH. It functions in the pathway aromatic compound metabolism; benzoate degradation via hydroxylation; catechol from benzoate: step 2/2. In terms of biological role, degradation of 2-hydro-1,2-dihydroxy benzoate (DHB) to catechol. In Acinetobacter baylyi (strain ATCC 33305 / BD413 / ADP1), this protein is 1,6-dihydroxycyclohexa-2,4-diene-1-carboxylate dehydrogenase (benD).